Consider the following 915-residue polypeptide: Probable serine/threonine-protein kinase dyrk2 (915 aa).

4 stretches are compositionally biased toward low complexity: residues 51–79, 108–119, 170–185, and 196–218; these read TSNT…PTIS, SSSKSSSNSSSI, SSSS…STTS, and SSNS…SGSS. 3 disordered regions span residues 51 to 119, 132 to 334, and 349 to 533; these read TSNT…SSSI, FSSS…SKSS, and AIKS…PTKS. A compositionally biased stretch (polar residues) spans 234–260; that stretch reads PSHTISDSPRSSTMKSRSVSISNGSLF. 6 stretches are compositionally biased toward low complexity: residues 261-287, 300-333, 352-364, 379-391, 399-425, and 433-533; these read SPTN…SSIS, SSST…PSKS, SRSL…LARV, SSSS…SFSS, SSSK…ASKI, and SLSS…PTKS. Residues 605 to 902 enclose the Protein kinase domain; it reads FEIVSILGQG…AEQGLKHDWI (298 aa). ATP-binding positions include 611–619 and Lys-634; that span reads LGQGSFCQV. Asp-731 functions as the Proton acceptor in the catalytic mechanism.

It belongs to the protein kinase superfamily. CMGC Ser/Thr protein kinase family. MNB/DYRK subfamily.

The enzyme catalyses L-seryl-[protein] + ATP = O-phospho-L-seryl-[protein] + ADP + H(+). It carries out the reaction L-threonyl-[protein] + ATP = O-phospho-L-threonyl-[protein] + ADP + H(+). It catalyses the reaction L-tyrosyl-[protein] + ATP = O-phospho-L-tyrosyl-[protein] + ADP + H(+). The sequence is that of Probable serine/threonine-protein kinase dyrk2 (dyrk2) from Dictyostelium discoideum (Social amoeba).